Reading from the N-terminus, the 372-residue chain is Chorismate synthase (372 aa).

Residues Arg-48 and Arg-54 each contribute to the NADP(+) site. Residues 125 to 127 (RSS), 238 to 239 (NA), Gly-278, 293 to 297 (KPTSS), and Arg-319 contribute to the FMN site.

Belongs to the chorismate synthase family. As to quaternary structure, homotetramer. FMNH2 is required as a cofactor.

It carries out the reaction 5-O-(1-carboxyvinyl)-3-phosphoshikimate = chorismate + phosphate. It participates in metabolic intermediate biosynthesis; chorismate biosynthesis; chorismate from D-erythrose 4-phosphate and phosphoenolpyruvate: step 7/7. Catalyzes the anti-1,4-elimination of the C-3 phosphate and the C-6 proR hydrogen from 5-enolpyruvylshikimate-3-phosphate (EPSP) to yield chorismate, which is the branch point compound that serves as the starting substrate for the three terminal pathways of aromatic amino acid biosynthesis. This reaction introduces a second double bond into the aromatic ring system. This Xylella fastidiosa (strain M23) protein is Chorismate synthase.